A 540-amino-acid chain; its full sequence is Keratin, type II cytoskeletal 73 (540 aa).

The interval 1–131 is head; the sequence is MSRQFTYKSG…DPEIQKVRAQ (131 aa). Positions 132–167 are coil 1A; that stretch reads EREQIKVLNNKFASFIDKVRFLEQQNQVLETKWELL. The region spanning 132 to 445 is the IF rod domain; sequence EREQIKVLNN…KLLEGEECRM (314 aa). The tract at residues 168–186 is linker 1; it reads QQLDLNNCKNNLEPILEGY. The interval 187–278 is coil 1B; sequence ISNLRKQLET…CLYEGETAQI (92 aa). The interval 279–302 is linker 12; sequence QSHISDTSIILSMDNNRNLDLDSI. Positions 303–441 are coil 2; it reads IAEVRAQYEE…ATYRKLLEGE (139 aa). The tail stretch occupies residues 442–540; that stretch reads ECRMSGEYTN…LSSPTKKTMR (99 aa). The disordered stretch occupies residues 502 to 540; the sequence is SGNCSPRGEARTRLGSASEFRDSQGKTLALSSPTKKTMR. The span at 526 to 540 shows a compositional bias: polar residues; sequence GKTLALSSPTKKTMR.

It belongs to the intermediate filament family. Heterotetramer of two type I and two type II keratins. Highly expressed in hair follicles from scalp. In hair, it is specifically present in the inner root sheath (IRS) of the hair follicle. Present in the IRS cuticle, but not in Henle or Huxley layers of the IRS. In the IRS cuticle, it is expressed between the lowermost bulb region of the cuticle and the region where Henle cells undergo abrupt terminal differentiation. Detected up to the uppermost cortex region where cuticle cells terminally differentiate (at protein level).

Functionally, has a role in hair formation. Specific component of keratin intermediate filaments in the inner root sheath (IRS) of the hair follicle. This is Keratin, type II cytoskeletal 73 (KRT73) from Homo sapiens (Human).